The primary structure comprises 77 residues: Acyl carrier protein (77 aa).

Residues 1–76 (MATFDDVKAV…DVVNYIDNLK (76 aa)) enclose the Carrier domain. An O-(pantetheine 4'-phosphoryl)serine modification is found at serine 36.

Belongs to the acyl carrier protein (ACP) family. Post-translationally, 4'-phosphopantetheine is transferred from CoA to a specific serine of apo-ACP by AcpS. This modification is essential for activity because fatty acids are bound in thioester linkage to the sulfhydryl of the prosthetic group.

The protein localises to the cytoplasm. Its pathway is lipid metabolism; fatty acid biosynthesis. Carrier of the growing fatty acid chain in fatty acid biosynthesis. This is Acyl carrier protein from Campylobacter jejuni subsp. jejuni serotype O:6 (strain 81116 / NCTC 11828).